Consider the following 411-residue polypeptide: Squalene synthase (411 aa).

2 residues coordinate NADP(+): Arg49 and Arg74. Positions 77, 80, and 81 each coordinate Mg(2+). NADP(+) is bound by residues Arg212, Lys312, and Arg314. The helical transmembrane segment at 388-408 (SPVLIVVIFIILAIILAQLFG) threads the bilayer.

The protein belongs to the phytoene/squalene synthase family. Mg(2+) is required as a cofactor.

It is found in the membrane. It carries out the reaction 2 (2E,6E)-farnesyl diphosphate + NADH + H(+) = squalene + 2 diphosphate + NAD(+). It catalyses the reaction 2 (2E,6E)-farnesyl diphosphate + NADPH + H(+) = squalene + 2 diphosphate + NADP(+). In terms of biological role, converts farnesyl diphosphate (FPP) into squalene, a precursor for sterol biosynthesis in eukaryotes. This chain is Squalene synthase, found in Solanum lycopersicum (Tomato).